We begin with the raw amino-acid sequence, 233 residues long: Biosynthetic peptidoglycan transglycosylase (233 aa).

The helical transmembrane segment at 4-24 threads the bilayer; the sequence is LAYLAGCLIVGVVAMQVYFFL.

It belongs to the glycosyltransferase 51 family.

The protein resides in the cell inner membrane. The enzyme catalyses [GlcNAc-(1-&gt;4)-Mur2Ac(oyl-L-Ala-gamma-D-Glu-L-Lys-D-Ala-D-Ala)](n)-di-trans,octa-cis-undecaprenyl diphosphate + beta-D-GlcNAc-(1-&gt;4)-Mur2Ac(oyl-L-Ala-gamma-D-Glu-L-Lys-D-Ala-D-Ala)-di-trans,octa-cis-undecaprenyl diphosphate = [GlcNAc-(1-&gt;4)-Mur2Ac(oyl-L-Ala-gamma-D-Glu-L-Lys-D-Ala-D-Ala)](n+1)-di-trans,octa-cis-undecaprenyl diphosphate + di-trans,octa-cis-undecaprenyl diphosphate + H(+). It participates in cell wall biogenesis; peptidoglycan biosynthesis. Peptidoglycan polymerase that catalyzes glycan chain elongation from lipid-linked precursors. The polypeptide is Biosynthetic peptidoglycan transglycosylase (Cupriavidus metallidurans (strain ATCC 43123 / DSM 2839 / NBRC 102507 / CH34) (Ralstonia metallidurans)).